The sequence spans 38 residues: Photosystem II reaction center protein X (38 aa).

The chain crosses the membrane as a helical span at residues 9-29 (ISSLTAGGLVVLTIAVALIVI).

The protein belongs to the PsbX family. Type 1 subfamily. In terms of assembly, PSII is composed of 1 copy each of membrane proteins PsbA, PsbB, PsbC, PsbD, PsbE, PsbF, PsbH, PsbI, PsbJ, PsbK, PsbL, PsbM, PsbT, PsbX, PsbY, PsbZ, Psb30/Ycf12, at least 3 peripheral proteins of the oxygen-evolving complex and a large number of cofactors. It forms dimeric complexes.

It is found in the plastid. It localises to the chloroplast thylakoid membrane. Involved in the binding and/or turnover of quinones at the Q(B) site of photosystem II (PSII). PSII is a light-driven water plastoquinone oxidoreductase, using light energy to abstract electrons from H(2)O, generating a proton gradient subsequently used for ATP formation. This chain is Photosystem II reaction center protein X, found in Trieres chinensis (Marine centric diatom).